Consider the following 340-residue polypeptide: Ketol-acid reductoisomerase (NADP(+)) (340 aa).

The KARI N-terminal Rossmann domain occupies 3–183; that stretch reads INVYYDKDCD…GGGRTGIIET (181 aa). Residues 26–29, S54, and 84–87 contribute to the NADP(+) site; these read FGSQ and DELQ. H109 is an active-site residue. Residue G135 coordinates NADP(+). In terms of domain architecture, KARI C-terminal knotted spans 184 to 329; that stretch reads TFKDETETDL…KKLRAMMPWI (146 aa). Mg(2+)-binding residues include D192, E196, E228, and E232. S253 lines the substrate pocket.

This sequence belongs to the ketol-acid reductoisomerase family. Mg(2+) is required as a cofactor.

It catalyses the reaction (2R)-2,3-dihydroxy-3-methylbutanoate + NADP(+) = (2S)-2-acetolactate + NADPH + H(+). The catalysed reaction is (2R,3R)-2,3-dihydroxy-3-methylpentanoate + NADP(+) = (S)-2-ethyl-2-hydroxy-3-oxobutanoate + NADPH + H(+). The protein operates within amino-acid biosynthesis; L-isoleucine biosynthesis; L-isoleucine from 2-oxobutanoate: step 2/4. Its pathway is amino-acid biosynthesis; L-valine biosynthesis; L-valine from pyruvate: step 2/4. Its function is as follows. Involved in the biosynthesis of branched-chain amino acids (BCAA). Catalyzes an alkyl-migration followed by a ketol-acid reduction of (S)-2-acetolactate (S2AL) to yield (R)-2,3-dihydroxy-isovalerate. In the isomerase reaction, S2AL is rearranged via a Mg-dependent methyl migration to produce 3-hydroxy-3-methyl-2-ketobutyrate (HMKB). In the reductase reaction, this 2-ketoacid undergoes a metal-dependent reduction by NADPH to yield (R)-2,3-dihydroxy-isovalerate. This is Ketol-acid reductoisomerase (NADP(+)) from Campylobacter concisus (strain 13826).